A 440-amino-acid chain; its full sequence is Transposon Ty1-NL2 Gag polyprotein (440 aa).

4 stretches are compositionally biased toward polar residues: residues 1–23 (MESQ…SVTS), 48–60 (TKAN…TPAS), 71–97 (SPQT…NQAN), and 129–152 (QFPQ…GNTF). Disordered regions lie at residues 1 to 97 (MESQ…NQAN), 129 to 171 (QFPQ…YVRP), and 352 to 440 (GSRN…PETY). Low complexity predominate over residues 153–165 (TDSSSADSDMTST). Positions 299-401 (NNGIHINNKV…NSKSKTARAH (103 aa)) are RNA-binding. Positions 402-418 (NVSTSNNSPSTDNDSIS) are enriched in low complexity. The residue at position 416 (serine 416) is a Phosphoserine. The span at 419–428 (KSTTEPIQLN) shows a compositional bias: polar residues. Residues 429 to 440 (NKHDLHLRPETY) show a composition bias toward basic and acidic residues.

In terms of assembly, homotrimer.

Its subcellular location is the cytoplasm. Capsid protein (CA) is the structural component of the virus-like particle (VLP), forming the shell that encapsulates the retrotransposons dimeric RNA genome. The particles are assembled from trimer-clustered units and there are holes in the capsid shells that allow for the diffusion of macromolecules. CA also has nucleocapsid-like chaperone activity, promoting primer tRNA(i)-Met annealing to the multipartite primer-binding site (PBS), dimerization of Ty1 RNA and initiation of reverse transcription. The polypeptide is Transposon Ty1-NL2 Gag polyprotein (TY1A-NL2) (Saccharomyces cerevisiae (strain ATCC 204508 / S288c) (Baker's yeast)).